Consider the following 348-residue polypeptide: uncharacterized protein (348 aa).

This is an uncharacterized protein from Caenorhabditis elegans.